The chain runs to 153 residues: MKNNNEIVEIYTDGACSGNPGPGGWAAVLIYKGIKKEISGFEENTTNNRMELKAAIEGLKALKRPCKVNLYSDSSYLINAFNEGWIEKWQKNNWLKSDKTPVENQDLWKELLEVSKPHQINWIKVKGHSDNEYNNLCDRLATEQIKKHIKENP.

The region spanning 4–146 (NNEIVEIYTD…CDRLATEQIK (143 aa)) is the RNase H type-1 domain. Mg(2+) contacts are provided by aspartate 13, glutamate 51, aspartate 73, and aspartate 138.

It belongs to the RNase H family. As to quaternary structure, monomer. Mg(2+) serves as cofactor.

The protein resides in the cytoplasm. It catalyses the reaction Endonucleolytic cleavage to 5'-phosphomonoester.. Endonuclease that specifically degrades the RNA of RNA-DNA hybrids. The polypeptide is Ribonuclease H (Caldanaerobacter subterraneus subsp. tengcongensis (strain DSM 15242 / JCM 11007 / NBRC 100824 / MB4) (Thermoanaerobacter tengcongensis)).